The primary structure comprises 160 residues: Transcription elongation factor GreA (160 aa).

The stretch at 43 to 75 forms a coiled coil; the sequence is LSENAEYEAAREQQAQMESKIVDLENKLTRASI.

It belongs to the GreA/GreB family.

Functionally, necessary for efficient RNA polymerase transcription elongation past template-encoded arresting sites. The arresting sites in DNA have the property of trapping a certain fraction of elongating RNA polymerases that pass through, resulting in locked ternary complexes. Cleavage of the nascent transcript by cleavage factors such as GreA or GreB allows the resumption of elongation from the new 3'terminus. GreA releases sequences of 2 to 3 nucleotides. This chain is Transcription elongation factor GreA, found in Prosthecochloris aestuarii (strain DSM 271 / SK 413).